A 508-amino-acid polypeptide reads, in one-letter code: Light-independent protochlorophyllide reductase subunit B (508 aa).

Asp-36 contributes to the [4Fe-4S] cluster binding site. The active-site Proton donor is the Asp-294. Substrate is bound at residue 429 to 430 (GM).

This sequence belongs to the ChlB/BchB/BchZ family. In terms of assembly, protochlorophyllide reductase is composed of three subunits; ChlL, ChlN and ChlB. Forms a heterotetramer of two ChlB and two ChlN subunits. Requires [4Fe-4S] cluster as cofactor.

The enzyme catalyses chlorophyllide a + oxidized 2[4Fe-4S]-[ferredoxin] + 2 ADP + 2 phosphate = protochlorophyllide a + reduced 2[4Fe-4S]-[ferredoxin] + 2 ATP + 2 H2O. It functions in the pathway porphyrin-containing compound metabolism; chlorophyll biosynthesis (light-independent). Functionally, component of the dark-operative protochlorophyllide reductase (DPOR) that uses Mg-ATP and reduced ferredoxin to reduce ring D of protochlorophyllide (Pchlide) to form chlorophyllide a (Chlide). This reaction is light-independent. The NB-protein (ChlN-ChlB) is the catalytic component of the complex. The protein is Light-independent protochlorophyllide reductase subunit B of Rippkaea orientalis (strain PCC 8801 / RF-1) (Cyanothece sp. (strain PCC 8801)).